The sequence spans 297 residues: NADH-ubiquinone oxidoreductase chain 1 (297 aa).

Helical transmembrane passes span 1–21, 34–54, 66–86, 99–119, 139–159, 170–190, 206–228, 235–257, and 277–297; these read MKSL…TLAE, PNHV…KLIL, WLFV…WLVI, LSIL…IYTG, VSYE…GATL, GTVL…AALA, LVAG…GEYA, TVLN…IWIR, and LPFL…LDLF.

This sequence belongs to the complex I subunit 1 family.

The protein resides in the mitochondrion inner membrane. The catalysed reaction is a ubiquinone + NADH + 5 H(+)(in) = a ubiquinol + NAD(+) + 4 H(+)(out). Its function is as follows. Core subunit of the mitochondrial membrane respiratory chain NADH dehydrogenase (Complex I) that is believed to belong to the minimal assembly required for catalysis. Complex I functions in the transfer of electrons from NADH to the respiratory chain. The immediate electron acceptor for the enzyme is believed to be ubiquinone. The protein is NADH-ubiquinone oxidoreductase chain 1 of Hyaloraphidium curvatum (Lower fungus).